The following is a 529-amino-acid chain: Bifunctional purine biosynthesis protein PurH (529 aa).

The region spanning 1–148 is the MGS-like domain; that stretch reads MNNVRPIRRA…KNHKDTTIVV (148 aa).

It belongs to the PurH family.

It carries out the reaction (6R)-10-formyltetrahydrofolate + 5-amino-1-(5-phospho-beta-D-ribosyl)imidazole-4-carboxamide = 5-formamido-1-(5-phospho-D-ribosyl)imidazole-4-carboxamide + (6S)-5,6,7,8-tetrahydrofolate. It catalyses the reaction IMP + H2O = 5-formamido-1-(5-phospho-D-ribosyl)imidazole-4-carboxamide. The protein operates within purine metabolism; IMP biosynthesis via de novo pathway; 5-formamido-1-(5-phospho-D-ribosyl)imidazole-4-carboxamide from 5-amino-1-(5-phospho-D-ribosyl)imidazole-4-carboxamide (10-formyl THF route): step 1/1. It participates in purine metabolism; IMP biosynthesis via de novo pathway; IMP from 5-formamido-1-(5-phospho-D-ribosyl)imidazole-4-carboxamide: step 1/1. This chain is Bifunctional purine biosynthesis protein PurH, found in Shewanella frigidimarina (strain NCIMB 400).